The primary structure comprises 85 residues: ATP synthase subunit c (85 aa).

2 helical membrane-spanning segments follow: residues 10–30 and 53–73; these read IAVSIMIGLAALGTALGFGIL and FIVAGLIDAIAMIGVAVALLF.

It belongs to the ATPase C chain family. F-type ATPases have 2 components, F(1) - the catalytic core - and F(0) - the membrane proton channel. F(1) has five subunits: alpha(3), beta(3), gamma(1), delta(1), epsilon(1). F(0) has three main subunits: a(1), b(2) and c(10-14). The alpha and beta chains form an alternating ring which encloses part of the gamma chain. F(1) is attached to F(0) by a central stalk formed by the gamma and epsilon chains, while a peripheral stalk is formed by the delta and b chains.

The protein localises to the cell inner membrane. Its function is as follows. F(1)F(0) ATP synthase produces ATP from ADP in the presence of a proton or sodium gradient. F-type ATPases consist of two structural domains, F(1) containing the extramembraneous catalytic core and F(0) containing the membrane proton channel, linked together by a central stalk and a peripheral stalk. During catalysis, ATP synthesis in the catalytic domain of F(1) is coupled via a rotary mechanism of the central stalk subunits to proton translocation. Key component of the F(0) channel; it plays a direct role in translocation across the membrane. A homomeric c-ring of between 10-14 subunits forms the central stalk rotor element with the F(1) delta and epsilon subunits. This Idiomarina loihiensis (strain ATCC BAA-735 / DSM 15497 / L2-TR) protein is ATP synthase subunit c.